The primary structure comprises 530 residues: Chaperone Ric-8A (530 aa).

Serine 435 carries the phosphoserine modification. 2 positions are modified to phosphothreonine: threonine 440 and threonine 442. Phosphoserine occurs at positions 501, 522, 523, and 527.

This sequence belongs to the synembryn family. Interacts with GDP-bound G alpha proteins GNAI1, GNAO1 and GNAQ, and with GNA13 with lower affinity. Does not interact with G-alpha proteins when they are in complex with subunits beta and gamma. Interacts (via C-terminus) with RGS14; the interaction stimulates the dissociation of the complex between RGS14 and the active GTP-bound form of GNAI1. Interacts with NCS1; interaction is favored in the absence of Ca(2+) and myristoylation of NCS1 is not required. Post-translationally, phosphorylated at Ser-435 and Thr-440 by CK2, stabilizing its interface with G alpha proteins.

It is found in the cytoplasm. Its subcellular location is the cell cortex. Functionally, chaperone that specifically binds and folds nascent G alpha proteins prior to G protein heterotrimer formation, promoting their stability and activity: folds GNAI1, GNAO1, GNA13 and GNAQ. Does not fold G(s) G-alpha proteins GNAS nor GNAL. Also acts as a guanine nucleotide exchange factor (GEF) for G alpha proteins by stimulating exchange of bound GDP for free GTP. Involved in regulation of microtubule pulling forces during mitotic movement of chromosomes by stimulating G(i)-alpha protein (GNAI1), possibly leading to release G(i)-alpha-GTP and NuMA proteins from the NuMA-GPSM2-G(i)-alpha-GDP complex. Also acts as an activator for G(q)-alpha (GNAQ) protein by enhancing the G(q)-coupled receptor-mediated ERK activation. The chain is Chaperone Ric-8A (RIC8A) from Pongo abelii (Sumatran orangutan).